Reading from the N-terminus, the 513-residue chain is MADKLIIFDTTLRDGEQSPGASMTKDEKLRIARQLERLRVDVIEAGFAASSNGDFEAVRAIADVIKESTVCSLARANDRDIARAAEALKSAARSRIHTFIATSELHMEKKLRMTREQVLEQARLSIRFARNLCEDIEFSPEDGYRSDPDFLCRVIEAVINEGATTINVPDTVGYGIPELYGNFIRTLRERVPNSDKAVWSVHCHNDLGMAVANSLAGVKIGGARQIECTINGLGERAGNCSLEEVVMAVRTRRDHFGLEVGIDTTQIVPASRLVSQTTGFIVQPNKAVVGANAFAHASGIHQDGVLKARDTYEIMRAEDVGWSANKIVLGKLSGRNAFKQRLQELGIELESETDVNAAFARFKDLADRKSDIFDEDIIALVGDESVTHEQETYRLLSLEQQSATGERPHAKVAFAVGETEFHAESEGNGPVDASLKAIESKLKSGAEMLLYSVNAITSGSTESQGEVTVRLQHGGRVVNGVGADPDIVVASAKAYLSALNKLHSKNERVAAQG.

A Pyruvate carboxyltransferase domain is found at 5–268 (LIIFDTTLRD…EVGIDTTQIV (264 aa)). Positions 14, 202, 204, and 239 each coordinate Mn(2+). Residues 394 to 513 (RLLSLEQQSA…SKNERVAAQG (120 aa)) form a regulatory domain region.

Belongs to the alpha-IPM synthase/homocitrate synthase family. LeuA type 1 subfamily. In terms of assembly, homodimer. Requires Mn(2+) as cofactor.

It is found in the cytoplasm. The catalysed reaction is 3-methyl-2-oxobutanoate + acetyl-CoA + H2O = (2S)-2-isopropylmalate + CoA + H(+). Its pathway is amino-acid biosynthesis; L-leucine biosynthesis; L-leucine from 3-methyl-2-oxobutanoate: step 1/4. Catalyzes the condensation of the acetyl group of acetyl-CoA with 3-methyl-2-oxobutanoate (2-ketoisovalerate) to form 3-carboxy-3-hydroxy-4-methylpentanoate (2-isopropylmalate). The polypeptide is 2-isopropylmalate synthase (Methylibium petroleiphilum (strain ATCC BAA-1232 / LMG 22953 / PM1)).